The sequence spans 130 residues: Glycine cleavage system H protein (130 aa).

One can recognise a Lipoyl-binding domain in the interval 24–106 (TVTIGITDHA…YDEGWFFKVK (83 aa)). Residue lysine 65 is modified to N6-lipoyllysine.

It belongs to the GcvH family. In terms of assembly, the glycine cleavage system is composed of four proteins: P, T, L and H. (R)-lipoate serves as cofactor.

In terms of biological role, the glycine cleavage system catalyzes the degradation of glycine. The H protein shuttles the methylamine group of glycine from the P protein to the T protein. In Teredinibacter turnerae (strain ATCC 39867 / T7901), this protein is Glycine cleavage system H protein.